Here is a 1237-residue protein sequence, read N- to C-terminus: Tyrosine-protein kinase sid-3 (1237 aa).

Residues 107–369 enclose the Protein kinase domain; sequence IKLYELIGEG…REDLVAAMFL (263 aa). ATP contacts are provided by residues 113–121 and Lys139; that span reads IGEGSFAVV. Asp230 (proton acceptor) is an active-site residue. The SH3 domain occupies 366 to 426; that stretch reads AMFLDAVARE…PRSVVFAQTN (61 aa). Disordered stretches follow at residues 683 to 704, 741 to 802, 826 to 919, 940 to 986, 999 to 1018, and 1134 to 1156; these read NQGSSTGNGVRPRPASSIGIQN, PPAP…APVQ, IQPQ…EERR, SNST…SEPI, SATTSQAKPVTQPIRHPSPP, and QQRQAGSSSRAVPPASASTSAAS. Polar residues-rich tracts occupy residues 749 to 766, 778 to 791, and 847 to 863; these read QPVSSQRVAQQQQNTLQK, KRPTGTTAPPSNGF, and SAPTHSNVAPTTSSQAS. Low complexity-rich tracts occupy residues 881 to 910 and 940 to 961; these read TPITVAPVHAAPTTSAPSTSVVTRRPTSTT and SNSTSSLPSAAVSTASSVPSTA. A compositionally biased stretch (low complexity) spans 1138 to 1156; that stretch reads AGSSSRAVPPASASTSAAS.

The protein belongs to the protein kinase superfamily. Tyr protein kinase family. SYK/ZAP-70 subfamily. As to expression, ubiquitously present in all tissues tested. Expressed in the somatic cells of gut, pharynx, body wall muscle, neurons, skin and excretory canal cells.

The protein localises to the cytoplasm. The enzyme catalyses L-tyrosyl-[protein] + ATP = O-phospho-L-tyrosyl-[protein] + ADP + H(+). Its function is as follows. Tyrosine-protein kinase which plays a role in RNA-mediated gene silencing by mediating import of double-stranded RNA (dsRNA) into cells. Not required for import of ingested dsRNA into intestinal cells but involved in subsequent export from intestinal cells to internal tissues. This Caenorhabditis elegans protein is Tyrosine-protein kinase sid-3 (sid-3).